The chain runs to 176 residues: Probable chorismate pyruvate-lyase (176 aa).

The substrate site is built by arginine 70, leucine 108, and glutamate 166.

Belongs to the UbiC family.

Its subcellular location is the cytoplasm. The enzyme catalyses chorismate = 4-hydroxybenzoate + pyruvate. Its pathway is cofactor biosynthesis; ubiquinone biosynthesis. Functionally, removes the pyruvyl group from chorismate, with concomitant aromatization of the ring, to provide 4-hydroxybenzoate (4HB) for the ubiquinone pathway. The sequence is that of Probable chorismate pyruvate-lyase from Dechloromonas aromatica (strain RCB).